The chain runs to 268 residues: Probable 1-acyl-sn-glycerol-3-phosphate acyltransferase (268 aa).

Positions 92 to 97 match the HXXXXD motif motif; that stretch reads HKSNLD.

This sequence belongs to the 1-acyl-sn-glycerol-3-phosphate acyltransferase family.

It carries out the reaction a 1-acyl-sn-glycero-3-phosphate + an acyl-CoA = a 1,2-diacyl-sn-glycero-3-phosphate + CoA. It participates in phospholipid metabolism; CDP-diacylglycerol biosynthesis; CDP-diacylglycerol from sn-glycerol 3-phosphate: step 2/3. Functionally, converts lysophosphatidic acid (LPA) into phosphatidic acid by incorporating acyl moiety at the 2 position. This is Probable 1-acyl-sn-glycerol-3-phosphate acyltransferase (plsC) from Mycoplasma genitalium (strain ATCC 33530 / DSM 19775 / NCTC 10195 / G37) (Mycoplasmoides genitalium).